A 270-amino-acid chain; its full sequence is Formamidopyrimidine-DNA glycosylase (270 aa).

The active-site Schiff-base intermediate with DNA is the P2. The Proton donor role is filled by E3. K58 acts as the Proton donor; for beta-elimination activity in catalysis. DNA contacts are provided by H91, R110, and R151. The FPG-type zinc-finger motif lies at 236–270; the sequence is RVYDREDAPCRRCATPIRRIVQAQRASFYCPTCQR. Residue R260 is the Proton donor; for delta-elimination activity of the active site.

The protein belongs to the FPG family. Monomer. Zn(2+) serves as cofactor.

It catalyses the reaction Hydrolysis of DNA containing ring-opened 7-methylguanine residues, releasing 2,6-diamino-4-hydroxy-5-(N-methyl)formamidopyrimidine.. The catalysed reaction is 2'-deoxyribonucleotide-(2'-deoxyribose 5'-phosphate)-2'-deoxyribonucleotide-DNA = a 3'-end 2'-deoxyribonucleotide-(2,3-dehydro-2,3-deoxyribose 5'-phosphate)-DNA + a 5'-end 5'-phospho-2'-deoxyribonucleoside-DNA + H(+). Functionally, involved in base excision repair of DNA damaged by oxidation or by mutagenic agents. Acts as a DNA glycosylase that recognizes and removes damaged bases. Has a preference for oxidized purines, such as 7,8-dihydro-8-oxoguanine (8-oxoG). Has AP (apurinic/apyrimidinic) lyase activity and introduces nicks in the DNA strand. Cleaves the DNA backbone by beta-delta elimination to generate a single-strand break at the site of the removed base with both 3'- and 5'-phosphates. The chain is Formamidopyrimidine-DNA glycosylase from Thiobacillus denitrificans (strain ATCC 25259 / T1).